We begin with the raw amino-acid sequence, 224 residues long: Transcriptional regulatory protein CiaR (224 aa).

The Response regulatory domain occupies 3–116; sequence KILLVEDDLG…ELKMRIQALL (114 aa). 4-aspartylphosphate is present on aspartate 51. The ompR/PhoB-type DNA-binding region spans 124 to 222; that stretch reads ENTLTYGNIV…LRSVGYLLKD (99 aa).

Phosphorylated by CiaH.

The protein localises to the cytoplasm. Its function is as follows. Member of the two-component regulatory system CiaH/CiaR. Involved in early steps of competence regulation and in penicillin susceptibility. The sequence is that of Transcriptional regulatory protein CiaR (ciaR) from Streptococcus pneumoniae (strain ATCC BAA-255 / R6).